A 391-amino-acid polypeptide reads, in one-letter code: Probable protein arginine N-methyltransferase 6.1 (391 aa).

Residues 1 to 35 (MLPSHLNGHSPLARRCPRLSAASPPATGDSDAAAA) are disordered. A compositionally biased stretch (low complexity) spans 20–35 (SAASPPATGDSDAAAA). In terms of domain architecture, SAM-dependent MTase PRMT-type spans 45–391 (DRIYFQSYSH…QTLVKDYAMR (347 aa)). 5 residues coordinate S-adenosyl-L-methionine: H58, R67, G91, E113, and E142. Catalysis depends on residues E156 and E165.

The protein belongs to the class I-like SAM-binding methyltransferase superfamily. Protein arginine N-methyltransferase family. PRMT6 subfamily.

In terms of biological role, arginine methyltransferase that can both catalyze the formation of omega-N monomethylarginine (MMA) and asymmetrical dimethylarginine (aDMA). This Oryza sativa subsp. japonica (Rice) protein is Probable protein arginine N-methyltransferase 6.1 (PRMT6.1).